The following is a 361-amino-acid chain: sn-glycerol-3-phosphate import ATP-binding protein UgpC (361 aa).

Positions 4-235 (LSLKGVRKSY…PATVFVAGFI (232 aa)) constitute an ABC transporter domain. 37-44 (GPSGCGKS) provides a ligand contact to ATP.

It belongs to the ABC transporter superfamily. sn-glycerol-3-phosphate importer (TC 3.A.1.1.3) family. The complex is composed of two ATP-binding proteins (UgpC), two transmembrane proteins (UgpA and UgpE) and a solute-binding protein (UgpB).

It is found in the cell inner membrane. The enzyme catalyses sn-glycerol 3-phosphate(out) + ATP + H2O = sn-glycerol 3-phosphate(in) + ADP + phosphate + H(+). Part of the ABC transporter complex UgpBAEC involved in sn-glycerol-3-phosphate (G3P) import. Responsible for energy coupling to the transport system. This Burkholderia cenocepacia (strain HI2424) protein is sn-glycerol-3-phosphate import ATP-binding protein UgpC.